Reading from the N-terminus, the 240-residue chain is Ubiquinone biosynthesis O-methyltransferase (240 aa).

Residues Arg-44, Gly-64, Asp-85, and Met-129 each contribute to the S-adenosyl-L-methionine site.

Belongs to the methyltransferase superfamily. UbiG/COQ3 family.

It catalyses the reaction a 3-demethylubiquinol + S-adenosyl-L-methionine = a ubiquinol + S-adenosyl-L-homocysteine + H(+). The catalysed reaction is a 3-(all-trans-polyprenyl)benzene-1,2-diol + S-adenosyl-L-methionine = a 2-methoxy-6-(all-trans-polyprenyl)phenol + S-adenosyl-L-homocysteine + H(+). It participates in cofactor biosynthesis; ubiquinone biosynthesis. O-methyltransferase that catalyzes the 2 O-methylation steps in the ubiquinone biosynthetic pathway. The chain is Ubiquinone biosynthesis O-methyltransferase from Escherichia coli O7:K1 (strain IAI39 / ExPEC).